The chain runs to 226 residues: Protein-L-isoaspartate O-methyltransferase (226 aa).

The active site involves Ser75.

It belongs to the methyltransferase superfamily. L-isoaspartyl/D-aspartyl protein methyltransferase family.

It is found in the cytoplasm. The enzyme catalyses [protein]-L-isoaspartate + S-adenosyl-L-methionine = [protein]-L-isoaspartate alpha-methyl ester + S-adenosyl-L-homocysteine. In terms of biological role, catalyzes the methyl esterification of L-isoaspartyl residues in peptides and proteins that result from spontaneous decomposition of normal L-aspartyl and L-asparaginyl residues. It plays a role in the repair and/or degradation of damaged proteins. This chain is Protein-L-isoaspartate O-methyltransferase, found in Lawsonia intracellularis (strain PHE/MN1-00).